We begin with the raw amino-acid sequence, 502 residues long: MENLSERFNVLQDQLMNIYETAAQTLEAQIEHWQILRREAVLLYFARQKGVTRLGYQPVPALMVSEAKAKEAIGMVLQLQSLQKSEFGKEPWSLVDTSTETYKSPPENHFKKGPMPIEVIYDKDADNANAYTMWRYIYYVDDDDKWHKSASGVNHTGIYFMHGSFRHYYVLFADDARRYSNTGHWEVKVNKDTVFTPVTSSTPPESPGGQADSNTSSKTPTTDTASRLSPTGSGERSQQTSTKGRRYERRPSSRTRRQQAQARQRRSRSKSRSRSRSQSRSRIRSRSRSRSRSESQSSKRRSRSRSRRKTSATRGRGPGSPTTTTSDRAARSPSTTSSATSQRSQRSRSRAGSSRGGRGRGGRRRHRLSESPTSKRSRRESGSVRLHGVSADAVGTSVHTVSSRHTGRLGRLLEEALDPPVILVRGDANTLRSFRNRAKHMYTGLFSSFSTAWSWVAGDGIERLGRSRMLISFISNSQRKHFDDAVRYPKGVDRSFGSFDSL.

The interval 1–201 is transactivation domain; the sequence is MENLSERFNV…DTVFTPVTSS (201 aa). Residues 195 to 388 are disordered; it reads FTPVTSSTPP…RESGSVRLHG (194 aa). Polar residues predominate over residues 211-242; it reads ADSNTSSKTPTTDTASRLSPTGSGERSQQTST. 2 stretches are compositionally biased toward basic residues: residues 243–290 and 298–311; these read KGRR…SRSR and SKRR…RKTS. The span at 312–344 shows a compositional bias: low complexity; it reads ATRGRGPGSPTTTTSDRAARSPSTTSSATSQRS. Positions 357–367 are enriched in basic residues; that stretch reads GRGRGGRRRHR. The segment at 418-502 is DNA-binding domain; sequence DPPVILVRGD…DRSFGSFDSL (85 aa).

Belongs to the papillomaviridae E2 protein family. Binds DNA as homodimer. Interacts with protein E1; this interaction greatly increases E1 DNA-binding activity. Interacts with protein L1; this interaction enhances E2-dependent replication and transcription activation. Interacts with protein L2; this interaction inhibits E2 transcriptional activity but not DNA replication function E2. Interacts with protein E7; this interaction inhibits E7 oncogenic activity. Interacts with host TAF1; this interaction modulates E2-dependent transcriptional regulation. Interacts with host BRD4; this interaction mediates E2 transcriptional activation function. Additionally, the interaction with host BRD4 on mitotic chromosomes mediates tethering of the viral genome. Interacts with host TOPBP1; this interaction is required for optimal viral DNA replication. In terms of processing, phosphorylated.

It localises to the host nucleus. Plays a role in the initiation of viral DNA replication. A dimer of E2 interacts with a dimer of E1 in order to improve specificity of E1 DNA binding activity. Once the complex recognizes and binds DNA at specific sites, the E2 dimer is removed from DNA. E2 also regulates viral transcription through binding to the E2RE response element (5'-ACCNNNNNNGGT-3') present in multiple copies in the regulatory regions of the viral genome. Activates or represses transcription depending on E2RE's position with regards to proximal promoter elements including the TATA-box. Repression occurs by sterically hindering the assembly of the transcription initiation complex. The polypeptide is Regulatory protein E2 (Human papillomavirus 25).